The primary structure comprises 34 residues: Photosystem II reaction center protein M (34 aa).

Residues 6 to 26 (LGAIATALFVFIPCVFLILLY) traverse the membrane as a helical segment.

This sequence belongs to the PsbM family. PSII is composed of 1 copy each of membrane proteins PsbA, PsbB, PsbC, PsbD, PsbE, PsbF, PsbH, PsbI, PsbJ, PsbK, PsbL, PsbM, PsbT, PsbX, PsbY, PsbZ, Psb30/Ycf12, peripheral proteins PsbO, CyanoQ (PsbQ), PsbU, PsbV and a large number of cofactors. It forms dimeric complexes.

The protein localises to the cellular thylakoid membrane. Functionally, one of the components of the core complex of photosystem II (PSII). PSII is a light-driven water:plastoquinone oxidoreductase that uses light energy to abstract electrons from H(2)O, generating O(2) and a proton gradient subsequently used for ATP formation. It consists of a core antenna complex that captures photons, and an electron transfer chain that converts photonic excitation into a charge separation. This subunit is found at the monomer-monomer interface. In Acaryochloris marina (strain MBIC 11017), this protein is Photosystem II reaction center protein M.